The chain runs to 681 residues: Proline dehydrogenase 1, mitochondrial (681 aa).

A mitochondrion-targeting transit peptide spans 1-30 (MALLRSLSAQRTAISLVYGRNSSKSSNSVA). Over residues 76–87 (STLVQPEVVSSE) the composition is skewed to polar residues. Disordered stretches follow at residues 76 to 113 (STLV…QRDP) and 216 to 239 (EEAE…EGSM). Residues 88–99 (TVKRSMKQESSQ) are compositionally biased toward basic and acidic residues.

It belongs to the proline oxidase family. The cofactor is FAD. As to expression, most abundant in developing nervous system.

It localises to the mitochondrion matrix. The catalysed reaction is L-proline + a quinone = (S)-1-pyrroline-5-carboxylate + a quinol + H(+). It participates in amino-acid degradation; L-proline degradation into L-glutamate; L-glutamate from L-proline: step 1/2. In terms of biological role, converts proline to delta-1-pyrroline-5-carboxylate. Involved in the conversion of proline to glutamate, which functions as a transmitter at neuromuscular junctions. Glutamate deficiency could possibly account for reduced motor activity. In Drosophila melanogaster (Fruit fly), this protein is Proline dehydrogenase 1, mitochondrial (slgA).